The following is a 150-amino-acid chain: SsrA-binding protein (150 aa).

This sequence belongs to the SmpB family.

Its subcellular location is the cytoplasm. Functionally, required for rescue of stalled ribosomes mediated by trans-translation. Binds to transfer-messenger RNA (tmRNA), required for stable association of tmRNA with ribosomes. tmRNA and SmpB together mimic tRNA shape, replacing the anticodon stem-loop with SmpB. tmRNA is encoded by the ssrA gene; the 2 termini fold to resemble tRNA(Ala) and it encodes a 'tag peptide', a short internal open reading frame. During trans-translation Ala-aminoacylated tmRNA acts like a tRNA, entering the A-site of stalled ribosomes, displacing the stalled mRNA. The ribosome then switches to translate the ORF on the tmRNA; the nascent peptide is terminated with the 'tag peptide' encoded by the tmRNA and targeted for degradation. The ribosome is freed to recommence translation, which seems to be the essential function of trans-translation. This is SsrA-binding protein from Coprothermobacter proteolyticus (strain ATCC 35245 / DSM 5265 / OCM 4 / BT).